The following is a 90-amino-acid chain: Probable Fe(2+)-trafficking protein (90 aa).

Belongs to the Fe(2+)-trafficking protein family.

Functionally, could be a mediator in iron transactions between iron acquisition and iron-requiring processes, such as synthesis and/or repair of Fe-S clusters in biosynthetic enzymes. This Azoarcus sp. (strain BH72) protein is Probable Fe(2+)-trafficking protein.